We begin with the raw amino-acid sequence, 111 residues long: Cytochrome c3, 26 kDa (111 aa).

Heme c contacts are provided by histidine 30, histidine 33, cysteine 38, cysteine 41, histidine 42, histidine 43, cysteine 54, cysteine 59, histidine 60, histidine 77, cysteine 86, cysteine 89, histidine 90, cysteine 105, cysteine 108, and histidine 109.

In terms of assembly, homodimer. Heme c serves as cofactor.

Its subcellular location is the periplasm. In terms of biological role, participates in sulfate respiration coupled with phosphorylation by transferring electrons from the enzyme dehydrogenase to ferredoxin. The chain is Cytochrome c3, 26 kDa from Desulfomicrobium norvegicum (strain DSM 1741 / NCIMB 8310) (Desulfovibrio baculatus (strain Norway 4)).